Here is a 468-residue protein sequence, read N- to C-terminus: GDNF family receptor alpha-1 (468 aa).

A signal peptide spans 1-24; that stretch reads MFLATLYFALPLLDLLMSAEVSGG. Tandem repeats lie at residues 25–113, 150–238, and 239–342. C36 and C42 form a disulfide bridge. Residue N59 is glycosylated (N-linked (GlcNAc...) asparagine). Intrachain disulfides connect C154–C214, C161–C167, C178–C192, C187–C233, C216–C221, C243–C313, C250–C256, C267–C285, C277–C337, and C315–C325. Residues N347 and N406 are each glycosylated (N-linked (GlcNAc...) asparagine). S430 carries GPI-anchor amidated serine lipidation. Positions 431-468 are cleaved as a propeptide — removed in mature form; sequence HITTKSMAAPPSCSLSSLPVLMLTALAALLSVSLAETS.

Belongs to the GDNFR family. As to quaternary structure, interacts with GDNF ligand and RET: forms a 2:2:2 ternary complex composed of GDNF ligand, GFRA1 and RET receptor. Interacts with SORL1, either alone or in complex with GDNF. Interaction between SORL1 and GFRA1 leads to GFRA1 internalization, but not degradation. In terms of tissue distribution, expressed in liver, brain, kidney and cochlea.

It localises to the cell membrane. It is found in the golgi apparatus. The protein localises to the trans-Golgi network. The protein resides in the endosome. Its subcellular location is the multivesicular body. In terms of biological role, coreceptor for GDNF, a neurotrophic factor that enhances survival and morphological differentiation of dopaminergic neurons and increases their high-affinity dopamine uptake. GDNF-binding leads to autophosphorylation and activation of the RET receptor. This Rattus norvegicus (Rat) protein is GDNF family receptor alpha-1 (Gfra1).